Consider the following 427-residue polypeptide: Acetylornithine aminotransferase (427 aa).

The segment at Met1–Pro23 is disordered. Pyridoxal 5'-phosphate contacts are provided by residues Gly124–Ala125 and Phe157. Residue Arg160 participates in N(2)-acetyl-L-ornithine binding. Asp248–Gln251 is a binding site for pyridoxal 5'-phosphate. Lys277 is subject to N6-(pyridoxal phosphate)lysine. Ser304 is a binding site for N(2)-acetyl-L-ornithine. Thr305 provides a ligand contact to pyridoxal 5'-phosphate.

It belongs to the class-III pyridoxal-phosphate-dependent aminotransferase family. ArgD subfamily. As to quaternary structure, homodimer. Pyridoxal 5'-phosphate serves as cofactor.

The protein resides in the cytoplasm. The enzyme catalyses N(2)-acetyl-L-ornithine + 2-oxoglutarate = N-acetyl-L-glutamate 5-semialdehyde + L-glutamate. It functions in the pathway amino-acid biosynthesis; L-arginine biosynthesis; N(2)-acetyl-L-ornithine from L-glutamate: step 4/4. The protein is Acetylornithine aminotransferase of Nostoc sp. (strain PCC 7120 / SAG 25.82 / UTEX 2576).